The sequence spans 241 residues: Beta-nerve growth factor (241 aa).

The first 18 residues, 1–18 (MSMLFYTLITAFLIGTQA), serve as a signal peptide directing secretion. Residues 19–121 (EPHSESNVPA…PFNRTHRSKR (103 aa)) constitute a propeptide that is removed on maturation. Asparagine 69, asparagine 114, and asparagine 166 each carry an N-linked (GlcNAc...) asparagine glycan. 3 disulfides stabilise this stretch: cysteine 136–cysteine 201, cysteine 179–cysteine 229, and cysteine 189–cysteine 231. Tyrosine 173 and lysine 209 together coordinate a 1-acyl-sn-glycero-3-phospho-(1D-myo-inositol). Residue lysine 209 participates in a 1-acyl-sn-glycero-3-phospho-L-serine binding.

The protein belongs to the NGF-beta family. As to quaternary structure, homodimer. The homodimer interacts with a single NTRK1 chain. The homodimer interacts with a single NGFR chain. The NGF dimer interacts with a single SORCS2 chain (via extracellular domain). The NGF precursor (proNGF) binds to a receptor complex formed by SORT1 and NGFR, which leads to NGF endocytosis. Both mature NGF and the immature NGF precursor (proNGF) interact with SORCS2 and with the heterodimer formed by SORCS2 and NGFR (via extracellular domains). The NGF precursor (proNGF) has much higher affinity for SORCS2 than mature NGF. The NGF precursor (proNGF) has much higher affinity for SORT1 than mature NGF. Interacts with ADAM10 in a divalent cation-dependent manner. Interacts with SORCS3.

The protein localises to the secreted. The protein resides in the endosome lumen. Its function is as follows. Nerve growth factor is important for the development and maintenance of the sympathetic and sensory nervous systems. Extracellular ligand for the NTRK1 and NGFR receptors, activates cellular signaling cascades to regulate neuronal proliferation, differentiation and survival. The immature NGF precursor (proNGF) functions as a ligand for the heterodimeric receptor formed by SORCS2 and NGFR, and activates cellular signaling cascades that lead to inactivation of RAC1 and/or RAC2, reorganization of the actin cytoskeleton and neuronal growth cone collapse. In contrast to mature NGF, the precursor form (proNGF) promotes neuronal apoptosis (in vitro). Inhibits metalloproteinase-dependent proteolysis of platelet glycoprotein VI. Binds lysophosphatidylinositol and lysophosphatidylserine between the two chains of the homodimer. The lipid-bound form promotes histamine relase from mast cells, contrary to the lipid-free form. This Pan troglodytes (Chimpanzee) protein is Beta-nerve growth factor (NGF).